We begin with the raw amino-acid sequence, 143 residues long: Anti-sigma F factor (143 aa).

This sequence belongs to the anti-sigma-factor family.

The catalysed reaction is L-seryl-[protein] + ATP = O-phospho-L-seryl-[protein] + ADP + H(+). It carries out the reaction L-threonyl-[protein] + ATP = O-phospho-L-threonyl-[protein] + ADP + H(+). Its function is as follows. Binds to sigma F and blocks its ability to form an RNA polymerase holoenzyme (E-sigma F). Phosphorylates SpoIIAA on a serine residue. This phosphorylation may enable SpoIIAA to act as an anti-anti-sigma factor that counteracts SpoIIAB and thus releases sigma F from inhibition. This chain is Anti-sigma F factor, found in Caldanaerobacter subterraneus subsp. tengcongensis (strain DSM 15242 / JCM 11007 / NBRC 100824 / MB4) (Thermoanaerobacter tengcongensis).